Here is a 344-residue protein sequence, read N- to C-terminus: Anthranilate phosphoribosyltransferase (344 aa).

5-phospho-alpha-D-ribose 1-diphosphate-binding positions include Gly-80, 83–84 (GD), Thr-88, 90–93 (NIST), 108–116 (KHGNRSVSS), and Ser-120. Anthranilate is bound at residue Gly-80. Ser-92 provides a ligand contact to Mg(2+). Asn-111 provides a ligand contact to anthranilate. Arg-166 is a binding site for anthranilate. Mg(2+) is bound by residues Asp-225 and Glu-226.

It belongs to the anthranilate phosphoribosyltransferase family. As to quaternary structure, homodimer. Requires Mg(2+) as cofactor.

The enzyme catalyses N-(5-phospho-beta-D-ribosyl)anthranilate + diphosphate = 5-phospho-alpha-D-ribose 1-diphosphate + anthranilate. The protein operates within amino-acid biosynthesis; L-tryptophan biosynthesis; L-tryptophan from chorismate: step 2/5. Catalyzes the transfer of the phosphoribosyl group of 5-phosphorylribose-1-pyrophosphate (PRPP) to anthranilate to yield N-(5'-phosphoribosyl)-anthranilate (PRA). The polypeptide is Anthranilate phosphoribosyltransferase (Petrotoga mobilis (strain DSM 10674 / SJ95)).